The following is a 157-amino-acid chain: Small ribosomal subunit protein uS7 (157 aa).

It belongs to the universal ribosomal protein uS7 family. As to quaternary structure, part of the 30S ribosomal subunit. Contacts proteins S9 and S11.

Functionally, one of the primary rRNA binding proteins, it binds directly to 16S rRNA where it nucleates assembly of the head domain of the 30S subunit. Is located at the subunit interface close to the decoding center, probably blocks exit of the E-site tRNA. This chain is Small ribosomal subunit protein uS7, found in Roseiflexus sp. (strain RS-1).